The primary structure comprises 274 residues: Glutamate racemase (274 aa).

Substrate contacts are provided by residues 9-10 and 41-42; these read DS and YG. The active-site Proton donor/acceptor is the cysteine 73. 74-75 is a substrate binding site; sequence NT. Cysteine 183 serves as the catalytic Proton donor/acceptor. 184 to 185 serves as a coordination point for substrate; the sequence is TH.

It belongs to the aspartate/glutamate racemases family.

The enzyme catalyses L-glutamate = D-glutamate. The protein operates within cell wall biogenesis; peptidoglycan biosynthesis. Functionally, provides the (R)-glutamate required for cell wall biosynthesis. The chain is Glutamate racemase from Shewanella baltica (strain OS195).